The following is a 754-amino-acid chain: 5-methyltetrahydropteroyltriglutamate--homocysteine methyltransferase (754 aa).

5-methyltetrahydropteroyltri-L-glutamate-binding positions include 17–20 (RELK) and lysine 117. Residues 431–433 (IGS) and glutamate 484 each bind L-homocysteine. L-methionine-binding positions include 431–433 (IGS) and glutamate 484. 5-methyltetrahydropteroyltri-L-glutamate-binding positions include 515-516 (RC) and tryptophan 561. Aspartate 599 provides a ligand contact to L-homocysteine. Aspartate 599 serves as a coordination point for L-methionine. Glutamate 605 contacts 5-methyltetrahydropteroyltri-L-glutamate. Zn(2+) is bound by residues histidine 641, cysteine 643, and glutamate 665. The active-site Proton donor is the histidine 694. Cysteine 726 is a binding site for Zn(2+).

This sequence belongs to the vitamin-B12 independent methionine synthase family. Zn(2+) is required as a cofactor.

The catalysed reaction is 5-methyltetrahydropteroyltri-L-glutamate + L-homocysteine = tetrahydropteroyltri-L-glutamate + L-methionine. Its pathway is amino-acid biosynthesis; L-methionine biosynthesis via de novo pathway; L-methionine from L-homocysteine (MetE route): step 1/1. In terms of biological role, catalyzes the transfer of a methyl group from 5-methyltetrahydrofolate to homocysteine resulting in methionine formation. This chain is 5-methyltetrahydropteroyltriglutamate--homocysteine methyltransferase, found in Salmonella enteritidis PT4 (strain P125109).